The following is a 103-amino-acid chain: NAD(P)H-quinone oxidoreductase subunit 4L, organellar chromatophore (103 aa).

The next 3 membrane-spanning stretches (helical) occupy residues 3–23 (IMLE…VWGL), 32–52 (VLMS…AFSN), and 63–83 (VFAI…LAIL).

Belongs to the complex I subunit 4L family. In terms of assembly, NDH is composed of at least 16 different subunits, 5 of which are encoded in the nucleus.

Its subcellular location is the plastid. The protein localises to the organellar chromatophore thylakoid membrane. The catalysed reaction is a plastoquinone + NADH + (n+1) H(+)(in) = a plastoquinol + NAD(+) + n H(+)(out). The enzyme catalyses a plastoquinone + NADPH + (n+1) H(+)(in) = a plastoquinol + NADP(+) + n H(+)(out). Its function is as follows. NDH shuttles electrons from NAD(P)H:plastoquinone, via FMN and iron-sulfur (Fe-S) centers, to quinones in the photosynthetic chain and possibly in a chloroplast respiratory chain. The immediate electron acceptor for the enzyme in this species is believed to be plastoquinone. Couples the redox reaction to proton translocation, and thus conserves the redox energy in a proton gradient. The sequence is that of NAD(P)H-quinone oxidoreductase subunit 4L, organellar chromatophore from Paulinella chromatophora.